Consider the following 51-residue polypeptide: MSHNTKGQKIRLAKAHNQNQRVPTWVIIKTNRKVVSHPKRRHWRRNSLDVK.

It belongs to the eukaryotic ribosomal protein eL39 family.

The sequence is that of Large ribosomal subunit protein eL39 from Methanococcoides burtonii (strain DSM 6242 / NBRC 107633 / OCM 468 / ACE-M).